We begin with the raw amino-acid sequence, 577 residues long: Zinc finger-containing ubiquitin peptidase 1 (577 aa).

The C2H2-type 1 zinc finger occupies 2 to 24 (LSCDICGETVTSEPDRKAHLIVH). The segment at 29–52 (IICPFCKLSGINYNEMCFHIETAH) adopts a C2H2-type 2; atypical zinc-finger fold. 2 C2H2-type zinc fingers span residues 153-176 (PECP…KTKH) and 192-214 (YDCP…VDLH). Positions 225 to 247 (DRVQCSSDRELAHQLQQEEERKR) are MIU. The segment covering 231–261 (SDRELAHQLQQEEERKRKSEESRQEREEFQK) has biased composition (basic and acidic residues). The disordered stretch occupies residues 231–262 (SDRELAHQLQQEEERKRKSEESRQEREEFQKL). The tract at residues 248–273 (KSEESRQEREEFQKLQRQYGLDNSGG) is zUBD/ZHA. Residue Lys261 is modified to N6-acetyllysine. The active-site Nucleophile is the Cys359. The active-site Proton acceptor is His490. The active site involves Asp511.

Belongs to the peptidase C78 family. ZUFSP subfamily. Interacts with RPA1 and RPA2.

It localises to the cytoplasm. Its subcellular location is the nucleus. The catalysed reaction is Thiol-dependent hydrolysis of ester, thioester, amide, peptide and isopeptide bonds formed by the C-terminal Gly of ubiquitin (a 76-residue protein attached to proteins as an intracellular targeting signal).. Its function is as follows. Deubiquitinase with endodeubiquitinase activity that specifically interacts with and cleaves 'Lys-63'-linked long polyubiquitin chains. Shows only weak activity against 'Lys-11' and 'Lys-48'-linked chains. Plays an important role in genome stability pathways, functioning to prevent spontaneous DNA damage and also promote cellular survival in response to exogenous DNA damage. Modulates the ubiquitination status of replication protein A (RPA) complex proteins in response to replication stress. The chain is Zinc finger-containing ubiquitin peptidase 1 from Rattus norvegicus (Rat).